Consider the following 630-residue polypeptide: Chaperone protein HtpG (630 aa).

Residues 1–339 (MKGQETRGFQ…SNDLPLNVSR (339 aa)) are a; substrate-binding. The interval 340 to 555 (EILQDNSITR…VDEMSTQMAK (216 aa)) is b. Residues 556 to 630 (LFAAAGQQVP…MNQLLLSEKA (75 aa)) are c.

It belongs to the heat shock protein 90 family. In terms of assembly, homodimer.

It is found in the cytoplasm. Functionally, molecular chaperone. Has ATPase activity. The chain is Chaperone protein HtpG from Photorhabdus laumondii subsp. laumondii (strain DSM 15139 / CIP 105565 / TT01) (Photorhabdus luminescens subsp. laumondii).